A 497-amino-acid chain; its full sequence is Glycerol kinase (497 aa).

Threonine 11 contacts ADP. Positions 11, 12, and 13 each coordinate ATP. Threonine 11 provides a ligand contact to sn-glycerol 3-phosphate. Arginine 15 serves as a coordination point for ADP. Arginine 81, glutamate 82, tyrosine 133, and aspartate 242 together coordinate sn-glycerol 3-phosphate. Positions 81, 82, 133, 242, and 243 each coordinate glycerol. Residues threonine 264 and glycine 307 each contribute to the ADP site. Residues threonine 264, glycine 307, glutamine 311, and glycine 412 each coordinate ATP. Residues glycine 412 and asparagine 416 each coordinate ADP.

Belongs to the FGGY kinase family.

The catalysed reaction is glycerol + ATP = sn-glycerol 3-phosphate + ADP + H(+). It functions in the pathway polyol metabolism; glycerol degradation via glycerol kinase pathway; sn-glycerol 3-phosphate from glycerol: step 1/1. Inhibited by fructose 1,6-bisphosphate (FBP). In terms of biological role, key enzyme in the regulation of glycerol uptake and metabolism. Catalyzes the phosphorylation of glycerol to yield sn-glycerol 3-phosphate. The polypeptide is Glycerol kinase (Polaromonas sp. (strain JS666 / ATCC BAA-500)).